Consider the following 785-residue polypeptide: Altered inheritance of mitochondria protein 3-2 (785 aa).

Disordered regions lie at residues Thr-33–Met-122, Gln-142–Leu-406, and Asn-418–Lys-785. Residues Gly-91–Ala-102 show a composition bias toward low complexity. Composition is skewed to polar residues over residues Thr-103 to Met-122 and Gln-143 to Ile-199. A compositionally biased stretch (basic and acidic residues) spans Lys-249–Lys-260. Composition is skewed to polar residues over residues Ser-283–Gly-310, Ala-350–Lys-366, Thr-375–Met-388, Gln-395–Asn-405, and Ser-455–Ile-465. The segment covering Asn-478 to Gln-497 has biased composition (basic and acidic residues). A compositionally biased stretch (polar residues) spans Ala-527 to Met-556. 2 stretches are compositionally biased toward basic and acidic residues: residues Lys-587 to Lys-613 and Lys-624 to Asn-637. Residues Ser-659–Thr-671 show a composition bias toward polar residues. Basic and acidic residues-rich tracts occupy residues Glu-672–Lys-686 and Phe-700–Val-710.

It belongs to the AIM3 family.

The protein localises to the membrane raft. This Candida glabrata (strain ATCC 2001 / BCRC 20586 / JCM 3761 / NBRC 0622 / NRRL Y-65 / CBS 138) (Yeast) protein is Altered inheritance of mitochondria protein 3-2 (AIM3-2).